Reading from the N-terminus, the 186-residue chain is NADH-quinone oxidoreductase subunit C (186 aa).

The disordered stretch occupies residues 166 to 186 (DSLTPWKGVGRPSDPFDGRKE).

The protein belongs to the complex I 30 kDa subunit family. In terms of assembly, NDH-1 is composed of 14 different subunits. Subunits NuoB, C, D, E, F, and G constitute the peripheral sector of the complex.

It is found in the cell inner membrane. It catalyses the reaction a quinone + NADH + 5 H(+)(in) = a quinol + NAD(+) + 4 H(+)(out). Functionally, NDH-1 shuttles electrons from NADH, via FMN and iron-sulfur (Fe-S) centers, to quinones in the respiratory chain. The immediate electron acceptor for the enzyme in this species is believed to be ubiquinone. Couples the redox reaction to proton translocation (for every two electrons transferred, four hydrogen ions are translocated across the cytoplasmic membrane), and thus conserves the redox energy in a proton gradient. This Neorickettsia sennetsu (strain ATCC VR-367 / Miyayama) (Ehrlichia sennetsu) protein is NADH-quinone oxidoreductase subunit C.